The following is a 310-amino-acid chain: NADP-dependent D-sorbitol-6-phosphate dehydrogenase (310 aa).

Y48 serves as the catalytic Proton donor. H108 is a binding site for substrate. 210 to 272 (TPLGGAAANK…SSKIQRLKEN (63 aa)) is a binding site for NADP(+).

The protein belongs to the aldo/keto reductase family.

It catalyses the reaction D-sorbitol 6-phosphate + NADP(+) = aldehydo-D-glucose 6-phosphate + NADPH + H(+). Functionally, synthesizes sorbitol-6-phosphate, a key intermediate in the synthesis of sorbitol which is a major photosynthetic product in many members of the Rosaceae family. The protein is NADP-dependent D-sorbitol-6-phosphate dehydrogenase (S6PDH) of Malus domestica (Apple).